Reading from the N-terminus, the 337-residue chain is Protein-methionine-sulfoxide reductase catalytic subunit MsrP (337 aa).

Positions 1–54 (MLIKLPRSSECKASEITPEGIYLSRRTLLGGSLAGLALGALPGGVGAAQMSRYA) form a signal peptide, tat-type signal. Mo-molybdopterin is bound by residues Asn94, 97–98 (YE), Cys152, Thr187, Asn237, Arg242, and 253–255 (SIK).

This sequence belongs to the MsrP family. Heterodimer of a catalytic subunit (MsrP) and a heme-binding subunit (MsrQ). Requires Mo-molybdopterin as cofactor. In terms of processing, predicted to be exported by the Tat system. The position of the signal peptide cleavage has not been experimentally proven.

It localises to the periplasm. It carries out the reaction L-methionyl-[protein] + a quinone + H2O = L-methionyl-(S)-S-oxide-[protein] + a quinol. The enzyme catalyses L-methionyl-[protein] + a quinone + H2O = L-methionyl-(R)-S-oxide-[protein] + a quinol. Functionally, part of the MsrPQ system that repairs oxidized periplasmic proteins containing methionine sulfoxide residues (Met-O), using respiratory chain electrons. Thus protects these proteins from oxidative-stress damage caused by reactive species of oxygen and chlorine generated by the host defense mechanisms. MsrPQ is essential for the maintenance of envelope integrity under bleach stress, rescuing a wide series of structurally unrelated periplasmic proteins from methionine oxidation. The catalytic subunit MsrP is non-stereospecific, being able to reduce both (R-) and (S-) diastereoisomers of methionine sulfoxide. The protein is Protein-methionine-sulfoxide reductase catalytic subunit MsrP of Pseudomonas putida (strain ATCC 47054 / DSM 6125 / CFBP 8728 / NCIMB 11950 / KT2440).